We begin with the raw amino-acid sequence, 1025 residues long: Multidrug resistance protein MdtC (1025 aa).

A run of 12 helical transmembrane segments spans residues 3–23 (FFAL…AITL), 333–353 (EVEQ…FLFL), 360–380 (IIPA…MYLC), 387–407 (LSLM…IVVL), 431–451 (VGFT…PLLL), 463–483 (FAVT…TLTP), 528–548 (LVGV…ISIP), 853–873 (VILI…LYES), 875–895 (VHPL…LLAL), 897–917 (LFNA…IGIV), 953–973 (PIMM…LSGG), and 984–1004 (ITIV…TPVV).

The protein belongs to the resistance-nodulation-cell division (RND) (TC 2.A.6) family. MdtC subfamily. Part of a tripartite efflux system composed of MdtA, MdtB and MdtC. MdtC forms a heteromultimer with MdtB.

It localises to the cell inner membrane. In terms of biological role, the MdtABC tripartite complex confers resistance against novobiocin and deoxycholate. The sequence is that of Multidrug resistance protein MdtC from Escherichia coli (strain ATCC 8739 / DSM 1576 / NBRC 3972 / NCIMB 8545 / WDCM 00012 / Crooks).